The primary structure comprises 374 residues: Dihydroorotate dehydrogenase (quinone) (374 aa).

FMN contacts are provided by residues 78 to 82 (AGFDK) and T102. K82 serves as a coordination point for substrate. 127–131 (NRMGF) lines the substrate pocket. Residues N159 and N192 each contribute to the FMN site. N192 contributes to the substrate binding site. The active-site Nucleophile is S195. N197 is a substrate binding site. FMN contacts are provided by K230 and T258. Residue 259 to 260 (NT) participates in substrate binding. FMN contacts are provided by residues G287, G316, and 337–338 (YT).

The protein belongs to the dihydroorotate dehydrogenase family. Type 2 subfamily. In terms of assembly, monomer. FMN serves as cofactor.

It is found in the cell membrane. The catalysed reaction is (S)-dihydroorotate + a quinone = orotate + a quinol. The protein operates within pyrimidine metabolism; UMP biosynthesis via de novo pathway; orotate from (S)-dihydroorotate (quinone route): step 1/1. Its function is as follows. Catalyzes the conversion of dihydroorotate to orotate with quinone as electron acceptor. This Acaryochloris marina (strain MBIC 11017) protein is Dihydroorotate dehydrogenase (quinone).